The sequence spans 391 residues: uncharacterized protein (391 aa).

Residues 85-314 (ATAAFVGFPS…LKEKIYEKLG (230 aa)) enclose the OBG-type G domain. Residues 91 to 98 (GFPSVGKS), 137 to 141 (DAPGI), and 267 to 270 (NKID) each bind GTP. In terms of domain architecture, TGS spans 314–389 (GFIKIYLKPQ…EDGDILTIVI (76 aa)).

This sequence belongs to the TRAFAC class OBG-HflX-like GTPase superfamily. OBG GTPase family.

This is an uncharacterized protein from Methanocaldococcus jannaschii (strain ATCC 43067 / DSM 2661 / JAL-1 / JCM 10045 / NBRC 100440) (Methanococcus jannaschii).